We begin with the raw amino-acid sequence, 59 residues long: Potassium channel toxin alpha-KTx 15.4 (59 aa).

The first 22 residues, 1-22, serve as a signal peptide directing secretion; that stretch reads MKFSSIILLTLLICSMSIFGNC. Residue Q23 is modified to Pyrrolidone carboxylic acid. Cystine bridges form between C30/C50, C35/C55, and C39/C57.

In terms of tissue distribution, expressed by the venom gland.

The protein localises to the secreted. Blocker of A-type voltage-gated potassium channels of cerebellar granular cells. May also inhibit Kv4/KCND when coexpressed with DPP6 or DPP10. The occlusion of the outer entry of the K(+) conducting pore is partially reversible and affects both open and closed channels. It shares the same target in rat brain than BmTX3 (AC Q8I0L5) and AmmTX3 (AC P60208). The protein is Potassium channel toxin alpha-KTx 15.4 of Androctonus australis (Sahara scorpion).